A 745-amino-acid chain; its full sequence is AP-3 complex subunit beta (745 aa).

Ser638 bears the Phosphoserine mark. The disordered stretch occupies residues 674–745; sequence YASETSESSE…TEPEPNYWQS (72 aa). Acidic residues predominate over residues 680–718; sequence ESSEGEYETSTSESEDEETDDTSQEEDNEKNSTPDEDTE.

Belongs to the adaptor complexes large subunit family. In terms of assembly, adaptor protein complex 3 (AP-3) is a heterotetramer composed of 2 large adaptins (apl5 and apl6), a medium adaptin (apm3) and a small adaptin (aps3).

The protein localises to the golgi apparatus. The protein resides in the cytoplasmic vesicle. Its subcellular location is the clathrin-coated vesicle membrane. Functionally, adaptins are components of the adaptor complexes which link clathrin to receptors in coated vesicles. Clathrin-associated protein complexes are believed to interact with the cytoplasmic tails of membrane proteins, leading to their selection and concentration. Beta adaptin is a subunit of the plasma membrane adaptor. This is AP-3 complex subunit beta (apl6) from Schizosaccharomyces pombe (strain 972 / ATCC 24843) (Fission yeast).